A 325-amino-acid polypeptide reads, in one-letter code: HPr kinase/phosphorylase (325 aa).

Catalysis depends on residues histidine 152 and lysine 173. An ATP-binding site is contributed by 167 to 174 (GESGLGKS). Serine 174 contacts Mg(2+). Catalysis depends on aspartate 191, which acts as the Proton acceptor; for phosphorylation activity. Proton donor; for dephosphorylation activity. Positions 215-224 (LEVRGIGLLD) are important for the catalytic mechanism of both phosphorylation and dephosphorylation. Position 216 (glutamate 216) interacts with Mg(2+). The active site involves arginine 258. The interval 279 to 284 (AVDAGR) is important for the catalytic mechanism of dephosphorylation.

This sequence belongs to the HPrK/P family. In terms of assembly, homohexamer. It depends on Mg(2+) as a cofactor.

The enzyme catalyses [HPr protein]-L-serine + ATP = [HPr protein]-O-phospho-L-serine + ADP + H(+). The catalysed reaction is [HPr protein]-O-phospho-L-serine + phosphate + H(+) = [HPr protein]-L-serine + diphosphate. Its function is as follows. Catalyzes the ATP- as well as the pyrophosphate-dependent phosphorylation of a specific serine residue in HPr, a phosphocarrier protein of the phosphoenolpyruvate-dependent sugar phosphotransferase system (PTS). HprK/P also catalyzes the pyrophosphate-producing, inorganic phosphate-dependent dephosphorylation (phosphorolysis) of seryl-phosphorylated HPr (P-Ser-HPr). This Leptothrix cholodnii (strain ATCC 51168 / LMG 8142 / SP-6) (Leptothrix discophora (strain SP-6)) protein is HPr kinase/phosphorylase.